Here is a 95-residue protein sequence, read N- to C-terminus: Small integral membrane protein 18 (95 aa).

The chain crosses the membrane as a helical span at residues Cys35–Leu55.

The protein localises to the membrane. This chain is Small integral membrane protein 18 (SMIM18), found in Homo sapiens (Human).